Reading from the N-terminus, the 411-residue chain is Tubulin beta-2 chain (411 aa).

7 residues coordinate GTP: Glu37, Ser106, Gly110, Thr111, Gly112, Asn172, and Asn194. Glu37 is a Mg(2+) binding site. Residues 392 to 411 (QYQDATAEPEGXYEEDYDEA) are disordered. Residues 402–411 (GXYEEDYDEA) show a composition bias toward acidic residues.

It belongs to the tubulin family. In terms of assembly, dimer of alpha and beta chains. A typical microtubule is a hollow water-filled tube with an outer diameter of 25 nm and an inner diameter of 15 nM. Alpha-beta heterodimers associate head-to-tail to form protofilaments running lengthwise along the microtubule wall with the beta-tubulin subunit facing the microtubule plus end conferring a structural polarity. Microtubules usually have 13 protofilaments but different protofilament numbers can be found in some organisms and specialized cells. The cofactor is Mg(2+).

The protein resides in the cytoplasm. The protein localises to the cytoskeleton. Tubulin is the major constituent of microtubules, a cylinder consisting of laterally associated linear protofilaments composed of alpha- and beta-tubulin heterodimers. Microtubules grow by the addition of GTP-tubulin dimers to the microtubule end, where a stabilizing cap forms. Below the cap, tubulin dimers are in GDP-bound state, owing to GTPase activity of alpha-tubulin. The chain is Tubulin beta-2 chain (TUBB2) from Anemia phyllitidis (Fern).